A 436-amino-acid chain; its full sequence is UDP-glucuronate 4-epimerase 5 (436 aa).

2 helical membrane passes run 36-56 (LTLW…LSPP) and 95-115 (GLTV…SIAL). Residue 97–128 (TVLVTGASGFVGTHVSIALRRRGDGVLGLDNF) coordinates NAD(+). Catalysis depends on Y247, which acts as the Proton acceptor.

It belongs to the NAD(P)-dependent epimerase/dehydratase family. In terms of assembly, homodimer. In leaves, pollen and siliques, but not in roots or flowers.

It is found in the golgi apparatus. It localises to the golgi stack membrane. The catalysed reaction is UDP-alpha-D-glucuronate = UDP-alpha-D-galacturonate. Involved in the synthesis of the negatively charged monosaccharide that forms the backbone of pectic cell wall components. The sequence is that of UDP-glucuronate 4-epimerase 5 (GAE5) from Arabidopsis thaliana (Mouse-ear cress).